A 551-amino-acid chain; its full sequence is Cytochrome P450 monooxygenase FCK2 (551 aa).

The next 3 helical transmembrane spans lie at F8–F28, L35–V55, and V69–L89. N-linked (GlcNAc...) asparagine glycosylation occurs at N258. A heme-binding site is contributed by C493.

The protein belongs to the cytochrome P450 family. Heme is required as a cofactor.

It is found in the membrane. The protein operates within secondary metabolite biosynthesis. Its function is as follows. Cytochrome P450 monooxygenase; part of the gene cluster that mediates the biosynthesis of cytokinins such as fusatin, fusatinic acids or 8-oxofusatin, known for their growth promoting and anti-senescence activities toward host plants. FCK1 is a bifunctional enzyme that performs the first steps in the biosynthesis of Fusarium cytokinins. It first condenses adenosine monophosphate (AMP) with dimethylallyl diphosphate (DMAPP) to yield isoprenyl adenosine monophosphate. It then catalyzes the removal of the phosphoribose to produce isopentenylaldehyde. The cytochrome P450 monooxygenase then converts isopentenylaldehyde to trans-zeatin. A condensation step converts trans-zeatin to fusatin which is further modified to produce fusatinic acid. The mechanism for oxidation of fusatin to fusatinic acid remains unknown. 8-oxofusatin could be produced through several pathways, via direct oxygenation of fusatin, or via the 8-oxo-pentenyladenine intermediate which itself must arise from either the prenylation of 8-oxo-AMP by FCK1 and/or oxygenation of isopentenylaldehyde. Both the FCK3 and FCK4 enzymes act downstream of the identified cytokinins to produce yet unidentified compounds. This chain is Cytochrome P450 monooxygenase FCK2, found in Fusarium pseudograminearum (strain CS3096) (Wheat and barley crown-rot fungus).